Consider the following 221-residue polypeptide: MRLILLGAPGAGKGTQAKFICEKFGIPQISTGDMLRAAVKAGTPLGVEAKKVMDAGGLVSDDIIIGLVKDRLKQDDCKSGYLFDGFPRTIPQAEAMKDAGVAIDYVLEIDVPFDAIIERMSGRRVHVASGRTYHLKYNPPKTEGVDDETGEPLIQRDDDKEETVKKRLDVYSQQTRPLVDYYSAWAANGDPAAKVAPPKYRKILGVGNVDEITARVFEALK.

An ATP-binding site is contributed by 10–15 (GAGKGT). The tract at residues 30–59 (STGDMLRAAVKAGTPLGVEAKKVMDAGGLV) is NMP. AMP-binding positions include Thr31, Arg36, 57-59 (GLV), 85-88 (GFPR), and Gln92. Residues 122 to 159 (GRRVHVASGRTYHLKYNPPKTEGVDDETGEPLIQRDDD) are LID. Residues Arg123 and 132 to 133 (TY) each bind ATP. The interval 138 to 159 (NPPKTEGVDDETGEPLIQRDDD) is disordered. Arg156 and Arg167 together coordinate AMP. Gly207 contributes to the ATP binding site.

It belongs to the adenylate kinase family. As to quaternary structure, monomer.

It localises to the cytoplasm. It catalyses the reaction AMP + ATP = 2 ADP. It functions in the pathway purine metabolism; AMP biosynthesis via salvage pathway; AMP from ADP: step 1/1. Functionally, catalyzes the reversible transfer of the terminal phosphate group between ATP and AMP. Plays an important role in cellular energy homeostasis and in adenine nucleotide metabolism. The chain is Adenylate kinase from Cupriavidus taiwanensis (strain DSM 17343 / BCRC 17206 / CCUG 44338 / CIP 107171 / LMG 19424 / R1) (Ralstonia taiwanensis (strain LMG 19424)).